Reading from the N-terminus, the 389-residue chain is Succinate--CoA ligase [ADP-forming] subunit beta (389 aa).

An ATP-grasp domain is found at 9–244 (KQLLAEYGIP…KTQEDETEVT (236 aa)). ATP contacts are provided by residues lysine 46, 53 to 55 (GRG), glycine 102, and glutamate 107. Residues asparagine 199 and aspartate 213 each coordinate Mg(2+). Substrate contacts are provided by residues asparagine 264 and 321-323 (GIV).

It belongs to the succinate/malate CoA ligase beta subunit family. In terms of assembly, heterotetramer of two alpha and two beta subunits. Mg(2+) serves as cofactor.

The enzyme catalyses succinate + ATP + CoA = succinyl-CoA + ADP + phosphate. It catalyses the reaction GTP + succinate + CoA = succinyl-CoA + GDP + phosphate. The protein operates within carbohydrate metabolism; tricarboxylic acid cycle; succinate from succinyl-CoA (ligase route): step 1/1. Its function is as follows. Succinyl-CoA synthetase functions in the citric acid cycle (TCA), coupling the hydrolysis of succinyl-CoA to the synthesis of either ATP or GTP and thus represents the only step of substrate-level phosphorylation in the TCA. The beta subunit provides nucleotide specificity of the enzyme and binds the substrate succinate, while the binding sites for coenzyme A and phosphate are found in the alpha subunit. This chain is Succinate--CoA ligase [ADP-forming] subunit beta, found in Xanthomonas campestris pv. campestris (strain 8004).